We begin with the raw amino-acid sequence, 544 residues long: Chaperonin GroEL (544 aa).

ATP-binding positions include threonine 29 to proline 32, aspartate 86 to threonine 90, glycine 413, asparagine 476 to leucine 478, and aspartate 492.

It belongs to the chaperonin (HSP60) family. Forms a cylinder of 14 subunits composed of two heptameric rings stacked back-to-back. Interacts with the co-chaperonin GroES.

The protein localises to the cytoplasm. The enzyme catalyses ATP + H2O + a folded polypeptide = ADP + phosphate + an unfolded polypeptide.. Its function is as follows. Together with its co-chaperonin GroES, plays an essential role in assisting protein folding. The GroEL-GroES system forms a nano-cage that allows encapsulation of the non-native substrate proteins and provides a physical environment optimized to promote and accelerate protein folding. The chain is Chaperonin GroEL from Desulfitobacterium hafniense (strain DSM 10664 / DCB-2).